Consider the following 92-residue polypeptide: Envelope glycoprotein J (92 aa).

A signal peptide spans 1–21 (MSLRAVWHLGLLGSLVGAVLA). The Extracellular portion of the chain corresponds to 22–49 (ATHRGPAANTTDPLTHAPVSPHPSPLGG). Asn-30 carries an N-linked (GlcNAc...) asparagine; by host glycan. The helical transmembrane segment at 50–70 (FAVPLVVGGLCAVVLGAACLL) threads the bilayer. Residues 71-92 (ELLRRTCRGWGRYHPYMDPVVV) lie on the Cytoplasmic side of the membrane.

It belongs to the alphaherpesvirinae glycoprotein J family.

It is found in the host Golgi apparatus membrane. Its subcellular location is the host endoplasmic reticulum membrane. The protein localises to the host endosome membrane. In terms of biological role, inhibits host cell apoptosis. Induces an increase in reactive oxygen species (ROS) in the host cell. This Homo sapiens (Human) protein is Envelope glycoprotein J (gJ).